A 373-amino-acid polypeptide reads, in one-letter code: MAKSVNGQQIIQLFEQFSPKAYAVEGDKIGLQIGTLNKPIKNVMVTLDVLESVIDEAIEKEVDLIIAHHPPIFRSLKHISTDQPAGRLIEKCLKHDIAVYAAHTNLDVADGGVNDLLAEALELSETEVLAPTYTDPLKKLAVYVPKEYEEQVRAALGNAGAGHIGEYSHCAFSSEGIGSFKPLDGAKPFIGEVGELELVHEVRLETVFPKSVEKAVINAMIKSHPYEEVAYDIYPVEQTPAEKGLGRVGTLKNEMTLKEFALFVKDKLDVNGVRMVGDADSMVKKVAVLGGDGNKYIHHAKRKGADVYVTGDLYFHVAHDAMMLGLNVVDPGHYAEKIMKEGVTRKLTSMCNDKKFGVNIFVSETDTNPFTFL.

Residues His68, His69, Asp107, His333, and Glu336 each coordinate a divalent metal cation.

This sequence belongs to the GTP cyclohydrolase I type 2/NIF3 family. In terms of assembly, homohexamer.

The polypeptide is GTP cyclohydrolase 1 type 2 homolog (yqfO) (Bacillus subtilis (strain 168)).